The sequence spans 653 residues: Chaperone protein DnaK (653 aa).

A Phosphothreonine; by autocatalysis modification is found at Thr200. Residues 615 to 653 (AEAAAAGAAGAGGAGASAGGASQQQDDVVDAEFKEVKKD) are disordered. Gly residues predominate over residues 623–632 (AGAGGAGASA).

This sequence belongs to the heat shock protein 70 family.

Functionally, acts as a chaperone. The polypeptide is Chaperone protein DnaK (Paraburkholderia xenovorans (strain LB400)).